A 765-amino-acid chain; its full sequence is DNA ligase (765 aa).

Residues 1 to 34 (MAGDDEDRAVPAAEGAPPPSALPPVSGLDVKAAE) are disordered. NAD(+) contacts are provided by residues 61-65 (DAEYD), 110-111 (SL), and Glu-144. Residue Lys-146 is the N6-AMP-lysine intermediate of the active site. Residues Arg-167, Glu-204, Lys-317, and Lys-341 each coordinate NAD(+). The Zn(2+) site is built by Cys-446, Cys-449, Cys-464, and Cys-470. The BRCT domain maps to 687–765 (ATDSAIAGKT…EDEWLAIAQG (79 aa)).

Belongs to the NAD-dependent DNA ligase family. LigA subfamily. Mg(2+) is required as a cofactor. Mn(2+) serves as cofactor.

It catalyses the reaction NAD(+) + (deoxyribonucleotide)n-3'-hydroxyl + 5'-phospho-(deoxyribonucleotide)m = (deoxyribonucleotide)n+m + AMP + beta-nicotinamide D-nucleotide.. Functionally, DNA ligase that catalyzes the formation of phosphodiester linkages between 5'-phosphoryl and 3'-hydroxyl groups in double-stranded DNA using NAD as a coenzyme and as the energy source for the reaction. It is essential for DNA replication and repair of damaged DNA. The protein is DNA ligase of Paracoccus denitrificans (strain Pd 1222).